The sequence spans 128 residues: Sulfurtransferase TusD (128 aa).

Cysteine 78 functions as the Cysteine persulfide intermediate in the catalytic mechanism.

This sequence belongs to the DsrE/TusD family. As to quaternary structure, heterohexamer, formed by a dimer of trimers. The hexameric TusBCD complex contains 2 copies each of TusB, TusC and TusD. The TusBCD complex interacts with TusE.

Its subcellular location is the cytoplasm. Its function is as follows. Part of a sulfur-relay system required for 2-thiolation of 5-methylaminomethyl-2-thiouridine (mnm(5)s(2)U) at tRNA wobble positions. Accepts sulfur from TusA and transfers it in turn to TusE. The polypeptide is Sulfurtransferase TusD (Escherichia fergusonii (strain ATCC 35469 / DSM 13698 / CCUG 18766 / IAM 14443 / JCM 21226 / LMG 7866 / NBRC 102419 / NCTC 12128 / CDC 0568-73)).